The sequence spans 253 residues: 5-oxoprolinase subunit A (253 aa).

This sequence belongs to the LamB/PxpA family. In terms of assembly, forms a complex composed of PxpA, PxpB and PxpC.

The enzyme catalyses 5-oxo-L-proline + ATP + 2 H2O = L-glutamate + ADP + phosphate + H(+). Catalyzes the cleavage of 5-oxoproline to form L-glutamate coupled to the hydrolysis of ATP to ADP and inorganic phosphate. The polypeptide is 5-oxoprolinase subunit A (Bacillus cereus (strain ATCC 14579 / DSM 31 / CCUG 7414 / JCM 2152 / NBRC 15305 / NCIMB 9373 / NCTC 2599 / NRRL B-3711)).